Here is a 1172-residue protein sequence, read N- to C-terminus: DNA-directed RNA polymerase subunit beta (1172 aa).

It belongs to the RNA polymerase beta chain family. As to quaternary structure, the RNAP catalytic core consists of 2 alpha, 1 beta, 1 beta' and 1 omega subunit. When a sigma factor is associated with the core the holoenzyme is formed, which can initiate transcription.

The catalysed reaction is RNA(n) + a ribonucleoside 5'-triphosphate = RNA(n+1) + diphosphate. Functionally, DNA-dependent RNA polymerase catalyzes the transcription of DNA into RNA using the four ribonucleoside triphosphates as substrates. This Thermosipho melanesiensis (strain DSM 12029 / CIP 104789 / BI429) protein is DNA-directed RNA polymerase subunit beta.